The sequence spans 161 residues: Phosphohistidine phosphatase SixA (161 aa).

The protein belongs to the SixA phosphatase family.

Functionally, exhibits phosphohistidine phosphatase activity towards the HPt domain of the ArcB sensor involved in the multistep His-Asp phosphorelay. This is Phosphohistidine phosphatase SixA (sixA) from Escherichia coli (strain K12).